Reading from the N-terminus, the 612-residue chain is MDVGSCSVGNNPLAQLHKHTQQNKSLQFNQKNNGRLNESPLQGTNKPGISEAFISNVNAISQENMANMQRFINGEPLIDDKRRMEIGPSSGRLPPFSNVHSLQTSANPTQIKGVNDISHWSQEFQGSNSIQNRNADTGNSEKAWQRGSTTASSRFQYPNTMMNNYAYASMNSLSGSRLQSPAFMNQQQSGRSKEGVNEQEQQPWTDQFEKLEKEVSENLDINDEIEKEENVSEVEQNKPETVEKEEGVYGDQYQSDFQEVWDSIHKDAEEVLPSELVNDDLNLGEDYLKYLGGRVNGNIEYAFQSNNEYFNNPNAYKIGCLLMENGAKLSEAALAFEAAVKEKPDHVDAWLRLGLVQTQNEKELNGISALEECLKLDPKNLEAMKTLAISYINEGYDMSAFTMLDKWAETKYPEIWSRIKQQDDKFQKEKGFTHIDMNAHITKQFLQLANNLSTIDPEIQLCLGLLFYTKDDFDKTIDCFESALRVNPNDELMWNRLGASLANSNRSEEAIQAYHRALQLKPSFVRARYNLAVSSMNIGCFKEAAGYLLSVLSMHEVNTNNKKGDVGSLLNTYNDTVIETLKRVFIAMNRDDLLQEVKPGMDLKRFKGEFSF.

Residue Met-1 is modified to N-acetylmethionine. The disordered stretch occupies residues 1–24; the sequence is MDVGSCSVGNNPLAQLHKHTQQNK. A Glycyl cysteine thioester (Cys-Gly) (interchain with G-Cter in ubiquitin) cross-link involves residue Cys-6. The segment at 7–29 is amphipathic helix 1 (AH1); sequence SVGNNPLAQLHKHTQQNKSLQFN. Residues Lys-18 and Lys-24 each participate in a glycyl lysine isopeptide (Lys-Gly) (interchain with G-Cter in ubiquitin) cross-link. Ser-61 carries the post-translational modification Phosphoserine. Residues 64–97 form a TPR 1 repeat; that stretch reads NMANMQRFINGEPLIDDKRRMEIGPSSGRLPPFS. Residues 70–104 are amphipathic helix 2 (AH2); sequence RFINGEPLIDDKRRMEIGPSSGRLPPFSNVHSLQT. Residues 120–124 carry the WxxxF/Y motif 1 motif; the sequence is WSQEF. Residues 129 to 151 form a disordered region; it reads SIQNRNADTGNSEKAWQRGSTTA. The tract at residues 158–174 is amphipathic helix 3 (AH3); sequence PNTMMNNYAYASMNSLS. The interval 182-202 is disordered; the sequence is AFMNQQQSGRSKEGVNEQEQQ. The WxxxF/Y motif 2 motif lies at 204 to 208; it reads WTDQF. The amphipathic helix 4 (AH4) stretch occupies residues 257–273; the sequence is FQEVWDSIHKDAEEVLP. 7 TPR repeats span residues 313-346, 347-380, 381-418, 419-456, 457-490, 491-524, and 525-558; these read PNAY…KPDH, VDAW…DPKN, LEAM…IWSR, IKQQ…STID, PEIQ…NPND, ELMW…KPSF, and VRAR…HEVN.

The protein belongs to the peroxisomal targeting signal receptor family. In terms of assembly, interacts (via WxxxF/Y and LVxEF motifs) with PEX14; promoting translocation through the PEX13-PEX14 docking complex. Monoubiquitinated at Cys-6 by PEX2 during PEX5 passage through the retrotranslocation channel: monoubiquitination acts as a signal for PEX5 extraction and is required for proper export from peroxisomes and recycling. Ubiquitination at Cys-6 is UBC4-independent but requires the presence of PEX4. When PEX5 recycling is compromised, polyubiquitinated at Lys-18 and Lys-24 by PEX10 during its passage through the retrotranslocation channel, leading to its degradation. Ubiquitination at Lys-18 and Lys-24 are UBC4-dependent. Monoubiquitination at Cys-6 and polyubiquitination at Lys-18 and Lys-24 are removed by UBP15 in the cytosol, resetting PEX5 for a subsequent import cycle.

It localises to the cytoplasm. Its subcellular location is the cytosol. The protein resides in the peroxisome matrix. Functionally, receptor that mediates peroxisomal import of proteins containing a C-terminal PTS1-type tripeptide peroxisomal targeting signal (SKL-type). Binds to cargo proteins containing a PTS1 peroxisomal targeting signal in the cytosol, and translocates them into the peroxisome matrix by passing through the PEX13-PEX14 docking complex along with cargo proteins. PEX5 receptor is then retrotranslocated into the cytosol, leading to release of bound cargo in the peroxisome matrix, and reset for a subsequent peroxisome import cycle. In Saccharomyces cerevisiae (strain ATCC 204508 / S288c) (Baker's yeast), this protein is Peroxisomal targeting signal receptor.